A 156-amino-acid polypeptide reads, in one-letter code: MAKTFKFIFYFWGAFVLVFALDQWVKSLTLAGLRWQSKYLDLTYALNTGVAFSMLSFLEHNLKYLHLALIGVLFIYLFWQKTLLKTHSIAFGMMLGAGVSNLLDRFIYGGVVDMFFWHKWFNFAIFNVADVMINISVALILIQEIFKKRKKDDRMD.

3 helical membrane-spanning segments follow: residues 5–25 (FKFI…DQWV), 64–84 (YLHL…KTLL), and 89–109 (IAFG…FIYG). Active-site residues include aspartate 113 and aspartate 130. The helical transmembrane segment at 122–142 (NFAIFNVADVMINISVALILI) threads the bilayer.

This sequence belongs to the peptidase A8 family.

It is found in the cell inner membrane. The catalysed reaction is Release of signal peptides from bacterial membrane prolipoproteins. Hydrolyzes -Xaa-Yaa-Zaa-|-(S,diacylglyceryl)Cys-, in which Xaa is hydrophobic (preferably Leu), and Yaa (Ala or Ser) and Zaa (Gly or Ala) have small, neutral side chains.. It functions in the pathway protein modification; lipoprotein biosynthesis (signal peptide cleavage). This protein specifically catalyzes the removal of signal peptides from prolipoproteins. The polypeptide is Lipoprotein signal peptidase (Campylobacter jejuni subsp. doylei (strain ATCC BAA-1458 / RM4099 / 269.97)).